The following is a 160-amino-acid chain: Transcription elongation factor GreA (160 aa).

Residues 49 to 77 (SEYQSAKDEQAFVEGRIQTLKNMIDNAEI) are a coiled coil.

It belongs to the GreA/GreB family.

Necessary for efficient RNA polymerase transcription elongation past template-encoded arresting sites. The arresting sites in DNA have the property of trapping a certain fraction of elongating RNA polymerases that pass through, resulting in locked ternary complexes. Cleavage of the nascent transcript by cleavage factors such as GreA or GreB allows the resumption of elongation from the new 3'terminus. GreA releases sequences of 2 to 3 nucleotides. This Leuconostoc mesenteroides subsp. mesenteroides (strain ATCC 8293 / DSM 20343 / BCRC 11652 / CCM 1803 / JCM 6124 / NCDO 523 / NBRC 100496 / NCIMB 8023 / NCTC 12954 / NRRL B-1118 / 37Y) protein is Transcription elongation factor GreA.